A 536-amino-acid polypeptide reads, in one-letter code: Caspase recruitment domain-containing protein 9 (536 aa).

Phosphoserine is present on Ser2. Zn(2+) is bound by residues Asp3, Cys10, and His73. The 93-residue stretch at 6 to 98 (NDDECWSVLE…QLYKKVTGKE (93 aa)) folds into the CARD domain. The interval 99–116 (PARVFSMIIDASGESGLT) is linker. Coiled-coil stretches lie at residues 117–277 (QLLM…DRSS) and 332–419 (LRKD…QQLE). Lys125 participates in a covalent cross-link: Glycyl lysine isopeptide (Lys-Gly) (interchain with G-Cter in ubiquitin). A Phosphothreonine modification is found at Thr231. The residue at position 277 (Ser277) is a Phosphoserine. Phosphoserine occurs at positions 424, 425, 431, 450, 460, 483, and 498. Residues 427–536 (LEDGSPRRSQ…GSDNTDTEGS (110 aa)) form a disordered region. Basic and acidic residues predominate over residues 487–502 (PPEKERRRLKESFENY). Residues 503–513 (RRKRALRKMQK) show a composition bias toward basic residues. 2 positions are modified to phosphothreonine; by CK2: Thr531 and Thr533.

In terms of assembly, monomer. Homodimer; homodimerization is mediated by the CARD domain which forms an extensive interaction with the adjacent linker and coiled-coil regions; leads to an autoinhibited state. Homomultimer; polymerizes following activation, forming a nucleating helical template that seeds BCL10-filament formation via a CARD-CARD interaction. Interacts (via CARD domain) with BCL10 (via CARD domain); interaction takes place following CARD9 activation and polymerization, leading to the formation of a filamentous CBM complex assembly. Component of a CBM complex (CARD9-BCL10, MALT1), composed of CARD9, BCL10 and MALT1. Interacts with RASGRF1. Interacts with NOD2 (via NACHT domain); interaction is direct. Interacts with RIPK2. Interacts with VHL; without leading to protein degradation. Phosphorylated at Thr-231 by PRKCD downstream of C-type lectin receptors activation: phosphorylation promotes interaction with BCL10, followed by activation of NF-kappa-B and MAP kinase p38 pathways. Phosphorylated at Thr-531 and Thr-533 by CK2 following interaction with VHL, leading to inhibit the ability to activate NF-kappa-B. Post-translationally, ubiquitinated at Lys-125 via 'Lys-27'-linked ubiquitin by TRIM62 downstream of C-type lectin receptors activation; leading to CARD9 activation, followed by activation of NF-kappa-B and MAP kinase p38 pathways. Deubiquitinated at Lys-125 by USP15, inhibiting CARD9. As to expression, expression is restricted to several populations of phagocytes, such as macrophages, monocytes, and dendritic cells. Highly expressed in spleen. Also detected in liver, placenta, lung, peripheral blood leukocytes and in brain.

Its subcellular location is the cytoplasm. With respect to regulation, maintained in an autoinhibited state via homodimerization in which the CARD domain forms an extensive interaction with the adjacent linker and coiled-coil regions. Activation downstream of C-type lectin receptors, by phosphorylation by PRKCD and/or ubiquitination by TRIM62, triggers disruption of the CARD domain-coiled coil interface, CARD9 homooligomerization and BCL10 recruitment, followed by activation of NF-kappa-B and MAP kinase p38 pathways. Zinc-binding inhibits activation by stabilizing the CARD ground-state conformation and restricting its capacity to form BCL10-nucleating filaments. Adapter protein that plays a key role in innate immune response against fungi by forming signaling complexes downstream of C-type lectin receptors. CARD9-mediated signals are essential for antifungal immunity against a subset of fungi from the phylum Ascomycota. Transduces signals in myeloid cells downstream of C-type lectin receptors CLEC7A (dectin-1), CLEC6A (dectin-2) and CLEC4E (Mincle), which detect pathogen-associated molecular pattern metabolites (PAMPs), such as fungal carbohydrates, and trigger CARD9 activation. Upon activation, CARD9 homooligomerizes to form a nucleating helical template that recruits BCL10 via CARD-CARD interaction, thereby promoting polymerization of BCL10 and subsequent recruitment of MALT1: this leads to activation of NF-kappa-B and MAP kinase p38 (MAPK11, MAPK12, MAPK13 and/or MAPK14) pathways which stimulate expression of genes encoding pro-inflammatory cytokines and chemokines. CARD9 signaling in antigen-presenting cells links innate sensing of fungi to the activation of adaptive immunity and provides a cytokine milieu that induces the development and subsequent of interleukin 17-producing T helper (Th17) cells. Also involved in activation of myeloid cells via classical ITAM-associated receptors and TLR: required for TLR-mediated activation of MAPK, while it is not required for TLR-induced activation of NF-kappa-B. CARD9 can also be engaged independently of BCL10: forms a complex with RASGRF1 downstream of C-type lectin receptors, which recruits and activates HRAS, leading to ERK activation and the production of cytokines. Acts as an important regulator of the intestinal commensal fungi (mycobiota) component of the gut microbiota. Plays an essential role in antifungal immunity against dissemination of gut fungi: acts by promoting induction of antifungal IgG antibodies response in CX3CR1(+) macrophages to confer protection against disseminated C.albicans or C.auris infection. Also mediates immunity against other pathogens, such as certain bacteria, viruses and parasites; CARD9 signaling is however redundant with other innate immune responses. In response to L.monocytogenes infection, required for the production of inflammatory cytokines activated by intracellular peptidoglycan: acts by connecting NOD2 recognition of peptidoglycan to downstream activation of MAP kinases (MAPK) without activating NF-kappa-B. The polypeptide is Caspase recruitment domain-containing protein 9 (Homo sapiens (Human)).